The chain runs to 153 residues: Lipoprotein signal peptidase (153 aa).

The next 3 membrane-spanning stretches (helical) occupy residues 11–31 (ILIL…SLFV), 39–59 (DCID…FAFL), and 68–88 (LVLV…CYAI). Active-site residues include Asp-112 and Asp-129. Residues 122 to 142 (FAVFNFADVMIDVAVVWILLL) form a helical membrane-spanning segment.

This sequence belongs to the peptidase A8 family.

Its subcellular location is the cell inner membrane. The catalysed reaction is Release of signal peptides from bacterial membrane prolipoproteins. Hydrolyzes -Xaa-Yaa-Zaa-|-(S,diacylglyceryl)Cys-, in which Xaa is hydrophobic (preferably Leu), and Yaa (Ala or Ser) and Zaa (Gly or Ala) have small, neutral side chains.. It participates in protein modification; lipoprotein biosynthesis (signal peptide cleavage). In terms of biological role, this protein specifically catalyzes the removal of signal peptides from prolipoproteins. The sequence is that of Lipoprotein signal peptidase from Sulfurimonas denitrificans (strain ATCC 33889 / DSM 1251) (Thiomicrospira denitrificans (strain ATCC 33889 / DSM 1251)).